The following is a 186-amino-acid chain: Dirigent protein 4 (186 aa).

An N-terminal signal peptide occupies residues 1 to 20; sequence MGKNLGLVVSFYLCITFALG. Asn-67, Asn-126, Asn-169, and Asn-180 each carry an N-linked (GlcNAc...) asparagine glycan.

It belongs to the plant dirigent protein family. In terms of assembly, homodimer.

It localises to the secreted. The protein localises to the extracellular space. Its subcellular location is the apoplast. Functionally, dirigent proteins impart stereoselectivity on the phenoxy radical-coupling reaction, yielding optically active lignans from two molecules of coniferyl alcohol in the biosynthesis of lignans, flavonolignans, and alkaloids and thus plays a central role in plant secondary metabolism. The polypeptide is Dirigent protein 4 (DIR4) (Arabidopsis thaliana (Mouse-ear cress)).